Consider the following 350-residue polypeptide: FAD:protein FMN transferase (350 aa).

The signal sequence occupies residues 1-19 (MKMTFCRAVCLAAAFLLMG). Cysteine 20 is lipidated: N-palmitoyl cysteine. The S-diacylglycerol cysteine moiety is linked to residue cysteine 20. FAD-binding positions include methionine 41, tyrosine 78, 119–121 (AMD), and aspartate 181. Residue threonine 184 participates in Mg(2+) binding. Positions 187 and 272 each coordinate FAD. Mg(2+) is bound by residues aspartate 298, aspartate 301, and threonine 302.

This sequence belongs to the ApbE family. Homodimer. The cofactor is Mg(2+).

Its subcellular location is the cell inner membrane. The enzyme catalyses L-threonyl-[protein] + FAD = FMN-L-threonyl-[protein] + AMP + H(+). Its function is as follows. Flavin transferase that catalyzes the transfer of the FMN moiety of FAD and its covalent binding to the hydroxyl group of a threonine residue in a target flavoprotein such as NqrB and NqrC, two subunits of the NQR complex. The protein is FAD:protein FMN transferase of Salmonella typhimurium (strain LT2 / SGSC1412 / ATCC 700720).